A 128-amino-acid chain; its full sequence is Putative transmembrane protein 244 (128 aa).

3 consecutive transmembrane segments (helical) span residues 17–37, 65–85, and 93–113; these read FLLC…MGCV, VLLV…VPVV, and AISV…EFPL.

The protein localises to the membrane. This chain is Putative transmembrane protein 244 (TMEM244), found in Homo sapiens (Human).